Reading from the N-terminus, the 468-residue chain is 6-phospho-beta-galactosidase 2 (468 aa).

Positions 19, 116, 159, 160, and 297 each coordinate D-galactose 6-phosphate. Glu160 (proton donor) is an active-site residue. Catalysis depends on Glu375, which acts as the Nucleophile. Residues Ser428, Trp429, Lys435, and Tyr437 each coordinate D-galactose 6-phosphate.

Belongs to the glycosyl hydrolase 1 family.

It catalyses the reaction a 6-phospho-beta-D-galactoside + H2O = D-galactose 6-phosphate + an alcohol. The protein operates within carbohydrate metabolism; lactose degradation; D-galactose 6-phosphate and beta-D-glucose from lactose 6-phosphate: step 1/1. The sequence is that of 6-phospho-beta-galactosidase 2 from Streptococcus pneumoniae (strain ATCC BAA-255 / R6).